The sequence spans 435 residues: GTPase Obg (435 aa).

The Obg domain maps to 1 to 158; that stretch reads MFIDRAKIYV…RWLYLELKLL (158 aa). Residues 159–328 enclose the OBG-type G domain; that stretch reads ADVGLVGLPN…LLELMEKYVR (170 aa). Residues 165–172, 190–194, 211–214, 280–283, and 309–311 contribute to the GTP site; these read GLPNAGKS, FTTKT, DIPG, NKID, and SAK. Residues serine 172 and threonine 192 each contribute to the Mg(2+) site. The 84-residue stretch at 343–426 folds into the OCT domain; sequence IQETKEGRVE…IGDYIFKYNA (84 aa).

Belongs to the TRAFAC class OBG-HflX-like GTPase superfamily. OBG GTPase family. Monomer. Mg(2+) serves as cofactor.

Its subcellular location is the cytoplasm. Its function is as follows. An essential GTPase which binds GTP, GDP and possibly (p)ppGpp with moderate affinity, with high nucleotide exchange rates and a fairly low GTP hydrolysis rate. Plays a role in control of the cell cycle, stress response, ribosome biogenesis and in those bacteria that undergo differentiation, in morphogenesis control. This Dictyoglomus thermophilum (strain ATCC 35947 / DSM 3960 / H-6-12) protein is GTPase Obg.